A 358-amino-acid chain; its full sequence is MATGDDSFPWDQDSILSRDLFSATSTELCYENLNRSCVRSPYSPGPRLILYAVFGFGAVLAVCGNLLVMTSILHFRQLHSPANFLVASLACADFLVGVMVMPFSMVRSVEGCWYFGESYCKFHSCFEGSFCYSSLFHLCFISVDRYIAVSDPLTYPTRFTASVSGKCITFSWLLSIIYSFSLLYTGANDAGLEDLVSALTCVGGCQIAVNQTWVFINFLLFLIPTLVMITVYSKIFLIAKQQAQNIEKMSKQTARASESYKDRVTKRERKAAKTLGIAVAAFLLSWLPYFIDSIIDAFLGFITPTYVYEILVWIVYYNSAMNPLIYAFFYSWFRKAIKLIVSGKILRENSSTTNLFPE.

Residues 1 to 47 (MATGDDSFPWDQDSILSRDLFSATSTELCYENLNRSCVRSPYSPGPR) lie on the Extracellular side of the membrane. Asn-34 carries N-linked (GlcNAc...) asparagine glycosylation. Cystine bridges form between Cys-37/Cys-201 and Cys-120/Cys-205. The chain crosses the membrane as a helical span at residues 48-68 (LILYAVFGFGAVLAVCGNLLV). The Cytoplasmic portion of the chain corresponds to 69–83 (MTSILHFRQLHSPAN). Residues 84-104 (FLVASLACADFLVGVMVMPFS) form a helical membrane-spanning segment. At 105–121 (MVRSVEGCWYFGESYCK) the chain is on the extracellular side. The chain crosses the membrane as a helical span at residues 122–143 (FHSCFEGSFCYSSLFHLCFISV). The Cytoplasmic portion of the chain corresponds to 144 to 166 (DRYIAVSDPLTYPTRFTASVSGK). The helical transmembrane segment at 167-187 (CITFSWLLSIIYSFSLLYTGA) threads the bilayer. Residues 188–212 (NDAGLEDLVSALTCVGGCQIAVNQT) lie on the Extracellular side of the membrane. A glycan (N-linked (GlcNAc...) asparagine) is linked at Asn-210. Residues 213-233 (WVFINFLLFLIPTLVMITVYS) form a helical membrane-spanning segment. Residues 234–274 (KIFLIAKQQAQNIEKMSKQTARASESYKDRVTKRERKAAKT) lie on the Cytoplasmic side of the membrane. Residues 275-295 (LGIAVAAFLLSWLPYFIDSII) form a helical membrane-spanning segment. Residues 296-309 (DAFLGFITPTYVYE) are Extracellular-facing. A helical membrane pass occupies residues 310–333 (ILVWIVYYNSAMNPLIYAFFYSWF). At 334–358 (RKAIKLIVSGKILRENSSTTNLFPE) the chain is on the cytoplasmic side.

Belongs to the G-protein coupled receptor 1 family. As to expression, specifically expressed in neurons of the olfactory epithelium.

The protein localises to the cell membrane. Olfactory receptor specific for trace amines, such as beta-phenylethylamine (beta-PEA). Trace amine compounds are enriched in animal body fluids and act on trace amine-associated receptors (TAARs) to elicit both intraspecific and interspecific innate behaviors. Ligand-binding causes a conformation change that triggers signaling via G(s)-class of G alpha proteins (GNAL or GNAS). This Mus musculus (Mouse) protein is Trace amine-associated receptor 7d.